The following is a 303-amino-acid chain: Energy-coupling factor transporter ATP-binding protein EcfA2 (303 aa).

An ABC transporter domain is found at 17-260 (LSVSNLSCFF…EAFLAHTTII (244 aa)). An ATP-binding site is contributed by 54 to 61 (GDSGSGKS).

It belongs to the ABC transporter superfamily. Energy-coupling factor EcfA family. As to quaternary structure, forms a stable energy-coupling factor (ECF) transporter complex composed of 2 membrane-embedded substrate-binding proteins (S component), 2 ATP-binding proteins (A component) and 2 transmembrane proteins (T component).

It is found in the cell membrane. Its function is as follows. ATP-binding (A) component of a common energy-coupling factor (ECF) ABC-transporter complex. Unlike classic ABC transporters this ECF transporter provides the energy necessary to transport a number of different substrates. This chain is Energy-coupling factor transporter ATP-binding protein EcfA2, found in Mycoplasma pneumoniae (strain ATCC 29342 / M129 / Subtype 1) (Mycoplasmoides pneumoniae).